Consider the following 193-residue polypeptide: Ion-translocating oxidoreductase complex subunit A (193 aa).

Transmembrane regions (helical) follow at residues 4–24 (FLLLLIGTVLVNNFVLVQFLG), 39–59 (IGMSMATTFVLTLASLSSYLV), 63–83 (ILLPLGIEYLRTLSFILVIAV), 102–122 (LLGIFLPLITTNCAVLGVALL), 134–154 (VIYGFGAAVGFSLVLILFAAM), and 171–191 (SISMITAGLMSLAFLGFTGLV).

This sequence belongs to the NqrDE/RnfAE family. The complex is composed of six subunits: RnfA, RnfB, RnfC, RnfD, RnfE and RnfG.

It localises to the cell inner membrane. Its function is as follows. Part of a membrane-bound complex that couples electron transfer with translocation of ions across the membrane. This is Ion-translocating oxidoreductase complex subunit A from Pseudoalteromonas atlantica (strain T6c / ATCC BAA-1087).